We begin with the raw amino-acid sequence, 593 residues long: Solute carrier family 13 member 2 (593 aa).

4 consecutive transmembrane segments (helical) span residues 11 to 31 (YRMY…PILV), 53 to 73 (ALPL…MGIM), 86 to 106 (TNVL…WNLH), and 121 to 141 (PALL…WISN). Polar residues predominate over residues 164–184 (SNVEEGSDNPTFELQEPSPQK). The interval 164–204 (SNVEEGSDNPTFELQEPSPQKETSKVDEKDNGQAQPLPAVP) is disordered. Basic and acidic residues predominate over residues 185–194 (ETSKVDEKDN). The next 8 helical transmembrane spans lie at 221–241 (GMSL…LTGT), 270–290 (FAFP…QILF), 327–347 (PMSF…LLWF), 369–389 (VMVS…MVPS), 451–471 (LMPL…LLVA), 485–505 (LLLP…LYVM), 514–534 (LAFM…FGGL), and 543–563 (GIML…SWGV).

The protein belongs to the SLC13A/DASS transporter (TC 2.A.47) family. NADC subfamily. As to expression, abundant in kidney and small intestine.

The protein localises to the apical cell membrane. The enzyme catalyses succinate(out) + 3 Na(+)(out) = succinate(in) + 3 Na(+)(in). The catalysed reaction is fumarate(out) + 3 Na(+)(out) = fumarate(in) + 3 Na(+)(in). It catalyses the reaction 2-oxoglutarate(out) + 3 Na(+)(out) = 2-oxoglutarate(in) + 3 Na(+)(in). Li(+) decreases succinate transport in the presence of Na(+), by competing at one of the three cation binding sites. Its function is as follows. Low-affinity sodium-dicarboxylate cotransporter, that mediates the entry of citric acid cycle intermediates, such as succinate, citrate, fumarate and alpha-ketoglutarate (2-oxoglutarate) into the small intestine and renal proximal tubule. Transports the dicarboxylate into the cell with a probable stoichiometry of 3 Na(+) for 1 divalent dicarboxylate, rendering the process electrogenic. Citrate is transported in protonated form as a divalent anion, rather than the trivalent form which is normally found in blood. Has a critical role in renal dicarboxylate transport. This Oryctolagus cuniculus (Rabbit) protein is Solute carrier family 13 member 2 (SLC13A2).